We begin with the raw amino-acid sequence, 222 residues long: Thiopurine S-methyltransferase (222 aa).

Residues Trp-10, Leu-45, Glu-66, and Arg-123 each contribute to the S-adenosyl-L-methionine site.

This sequence belongs to the class I-like SAM-binding methyltransferase superfamily. TPMT family.

Its subcellular location is the cytoplasm. The enzyme catalyses S-adenosyl-L-methionine + a thiopurine = S-adenosyl-L-homocysteine + a thiopurine S-methylether.. The sequence is that of Thiopurine S-methyltransferase from Pseudomonas fluorescens (strain ATCC BAA-477 / NRRL B-23932 / Pf-5).